Here is a 136-residue protein sequence, read N- to C-terminus: Small ribosomal subunit protein uS12 (136 aa).

Asp-89 carries the 3-methylthioaspartic acid modification. Residues 101–136 (SLDTSGVADRKQSRSKYGAKQPKAGVPAPVKGKGKR) form a disordered region.

It belongs to the universal ribosomal protein uS12 family. In terms of assembly, part of the 30S ribosomal subunit. Contacts proteins S8 and S17. May interact with IF1 in the 30S initiation complex.

Functionally, with S4 and S5 plays an important role in translational accuracy. Its function is as follows. Interacts with and stabilizes bases of the 16S rRNA that are involved in tRNA selection in the A site and with the mRNA backbone. Located at the interface of the 30S and 50S subunits, it traverses the body of the 30S subunit contacting proteins on the other side and probably holding the rRNA structure together. The combined cluster of proteins S8, S12 and S17 appears to hold together the shoulder and platform of the 30S subunit. This is Small ribosomal subunit protein uS12 from Pelodictyon phaeoclathratiforme (strain DSM 5477 / BU-1).